The following is a 137-amino-acid chain: ATP synthase epsilon chain (137 aa).

Belongs to the ATPase epsilon chain family. F-type ATPases have 2 components, CF(1) - the catalytic core - and CF(0) - the membrane proton channel. CF(1) has five subunits: alpha(3), beta(3), gamma(1), delta(1), epsilon(1). CF(0) has three main subunits: a, b and c.

It is found in the cellular thylakoid membrane. Produces ATP from ADP in the presence of a proton gradient across the membrane. This Synechococcus sp. (strain JA-2-3B'a(2-13)) (Cyanobacteria bacterium Yellowstone B-Prime) protein is ATP synthase epsilon chain.